Here is a 324-residue protein sequence, read N- to C-terminus: NADH-ubiquinone oxidoreductase chain 1 (324 aa).

The next 8 helical transmembrane spans lie at 5–25 (ILLYLINPLAYIVPILLATAF), 75–95 (FLFLATPTLALTLALLMWMPL), 106–126 (LGLLFILAVSSLTVYTILGSG), 146–166 (ISYEVSLGLILLSMIIFTGGF), 177–197 (TVWLLVPGWPLAMMWYISTLA), 228–248 (LFFLAEYTNILMMNTLSVILF), 259–279 (QISTFYLMMKATLLTLIFLWI), and 299–319 (FLPLTLALILWHAALPIATAS).

The protein belongs to the complex I subunit 1 family.

The protein localises to the mitochondrion inner membrane. It carries out the reaction a ubiquinone + NADH + 5 H(+)(in) = a ubiquinol + NAD(+) + 4 H(+)(out). Core subunit of the mitochondrial membrane respiratory chain NADH dehydrogenase (Complex I) that is believed to belong to the minimal assembly required for catalysis. Complex I functions in the transfer of electrons from NADH to the respiratory chain. The immediate electron acceptor for the enzyme is believed to be ubiquinone. In Squalus acanthias (Spiny dogfish), this protein is NADH-ubiquinone oxidoreductase chain 1 (MT-ND1).